The primary structure comprises 1220 residues: DNA polymerase catalytic subunit (1220 aa).

This sequence belongs to the DNA polymerase type-B family. As to quaternary structure, forms a complex with the ssDNA-binding protein, the DNA polymerase processivity factor, and the alkaline exonuclease. Interacts with the helicase-primase complex composed of the primase, the helicase and the primase-associated factor; this interaction may coordinate leading and lagging strand DNA synthesis at the replication fork.

The protein localises to the host nucleus. The enzyme catalyses DNA(n) + a 2'-deoxyribonucleoside 5'-triphosphate = DNA(n+1) + diphosphate. The catalysed reaction is Endonucleolytic cleavage to 5'-phosphomonoester.. Replicates viral genomic DNA. The replication complex is composed of six viral proteins: the DNA polymerase, processivity factor, primase, primase-associated factor, helicase, and ssDNA-binding protein. Additionally, the polymerase contains an intrinsic ribonuclease H (RNase H) activity that specifically degrades RNA/DNA heteroduplexes or duplex DNA substrates in the 5' to 3' direction. Therefore, it can catalyze the excision of the RNA primers that initiate the synthesis of Okazaki fragments at a replication fork during viral DNA replication. The protein is DNA polymerase catalytic subunit (MDV043) of Gallid herpesvirus 2 (strain Chicken/Md5/ATCC VR-987) (GaHV-2).